Here is a 1538-residue protein sequence, read N- to C-terminus: Dicer-like protein 1 (1538 aa).

Residues 39-72 (DPAESSADVHKDEHSSDNSDNDNEAVPKPNDFSQ) form a disordered region. Residues 45-55 (ADVHKDEHSSD) are compositionally biased toward basic and acidic residues. Residues 134–315 (LFERAKTQNT…EAATRLETLL (182 aa)) enclose the Helicase ATP-binding domain. 147–154 (LDTGSGKT) contacts ATP. Positions 260 to 263 (DEAH) match the DEAH box motif. The region spanning 460 to 619 (ELSKHFSDTT…ETLPEDRILH (160 aa)) is the Helicase C-terminal domain. A Dicer dsRNA-binding fold domain is found at 652–742 (AIAILARYAS…NSIYHRRLPA (91 aa)). The PAZ domain maps to 892-1020 (DTVSFVHNND…ICAEPLRISA (129 aa)). RNase III domains follow at residues 1044-1203 (IALE…LSGG) and 1254-1406 (ARHV…VDSK). Mg(2+) is bound by residues Glu1295, Asp1392, and Glu1395. A DRBM domain is found at 1440–1508 (TFLHNKLTNE…SEKALAVLDG (69 aa)). 4 residues coordinate Zn(2+): Cys1452, His1479, Cys1520, and Cys1522.

This sequence belongs to the helicase family. Dicer subfamily. Mg(2+) serves as cofactor. The cofactor is Mn(2+).

In terms of biological role, dicer-like endonuclease involved in cleaving double-stranded RNA in the RNA interference (RNAi) pathway. Produces 21 to 25 bp dsRNAs (siRNAs) which target the selective destruction of homologous RNAs leading to sequence-specific suppression of gene expression, called post-transcriptional gene silencing (PTGS). Part of a broad host defense response against viral infection and transposons. In Neosartorya fischeri (strain ATCC 1020 / DSM 3700 / CBS 544.65 / FGSC A1164 / JCM 1740 / NRRL 181 / WB 181) (Aspergillus fischerianus), this protein is Dicer-like protein 1 (dcl1).